Here is a 214-residue protein sequence, read N- to C-terminus: uncharacterized protein (214 aa).

Transmembrane regions (helical) follow at residues V4–F23, S35–Y57, Q67–T89, V96–Y118, A128–S150, L155–V177, and T187–V209.

It is found in the cell membrane. This is an uncharacterized protein from Treponema pallidum (strain Nichols).